Reading from the N-terminus, the 373-residue chain is MTVYNFAAGPATLPDPVIKQIQEELPSLQGSGMSILEISHRSQMFDKIIDTAKQDIKDLMHVPDNYHILFFQGGGTGQFAAVPMNLATKHKRIALLDSGHWATRAGDEAANLGVTVDVLDSTKDKHYQELPHMPHAISASDYDYLHITTNNTIEGTAYHTLPEHGDVTLVGDLSSNFMAEEYQVSDFGLIFGGVQKNLGPAGVTVVIVRDDLVNHVDHIPSILNYELFVKKNSMFNTPPVFAIYATGLVLKWLKQQGGIAGIEALNKKKSALLYDFLDQSTLFHNDIKKTDRSLTNIPFKTTDPVLDKQVIAEADQAGLKNLKGHRSVGGLRASLYNAMPLAGVQALVDFLYNFEKQHKNNTMGKRYVSSKNI.

An L-glutamate-binding site is contributed by R41. Pyridoxal 5'-phosphate is bound by residues 75-76, W101, T152, D172, and Q195; that span reads GT. K196 is subject to N6-(pyridoxal phosphate)lysine. Position 236 to 237 (236 to 237) interacts with pyridoxal 5'-phosphate; it reads NT.

Belongs to the class-V pyridoxal-phosphate-dependent aminotransferase family. SerC subfamily. In terms of assembly, homodimer. Pyridoxal 5'-phosphate is required as a cofactor.

Its subcellular location is the cytoplasm. It carries out the reaction O-phospho-L-serine + 2-oxoglutarate = 3-phosphooxypyruvate + L-glutamate. It catalyses the reaction 4-(phosphooxy)-L-threonine + 2-oxoglutarate = (R)-3-hydroxy-2-oxo-4-phosphooxybutanoate + L-glutamate. Its pathway is amino-acid biosynthesis; L-serine biosynthesis; L-serine from 3-phospho-D-glycerate: step 2/3. Catalyzes the reversible conversion of 3-phosphohydroxypyruvate to phosphoserine and of 3-hydroxy-2-oxo-4-phosphonooxybutanoate to phosphohydroxythreonine. In Lactobacillus helveticus (strain DPC 4571), this protein is Phosphoserine aminotransferase.